The primary structure comprises 66 residues: Large ribosomal subunit protein uL29 (66 aa).

The protein belongs to the universal ribosomal protein uL29 family.

The protein is Large ribosomal subunit protein uL29 of Deinococcus deserti (strain DSM 17065 / CIP 109153 / LMG 22923 / VCD115).